Consider the following 365-residue polypeptide: NAC domain-containing protein 43 (365 aa).

In terms of domain architecture, NAC spans 16 to 180 (VPPGFRFHPT…GWVVCRIFKK (165 aa)). A DNA-binding region spans residues 116-186 (IGMRKTLVFY…IFKKKNLHKT (71 aa)).

As to expression, expressed in various aboveground tissues undergoing thickening of the lignified secondary wall such as anthers, filaments of stamens, the base of carpels, styles, the boundaries between siliques and pedicels, the midrib of leaf veins, and inflorescence stems, specifically in interfascicular fibers (sclerenchyma), cells differentiating into vascular vessels, and xylary fibers (secondary xylem).

Its subcellular location is the nucleus. Transcription activator of genes involved in biosynthesis of secondary walls. Together with NST2 and NST3, required for the secondary cell wall thickening of sclerenchymatous fibers, secondary xylem (tracheary elements), and of the anther endocethium, which is necessary for anther dehiscence. May also regulate the secondary cell wall lignification of other tissues. In Arabidopsis thaliana (Mouse-ear cress), this protein is NAC domain-containing protein 43 (NAC043).